The chain runs to 289 residues: Bifunctional protein FolD (289 aa).

NADP(+) contacts are provided by residues 166 to 168, S191, and I232; that span reads GRS.

It belongs to the tetrahydrofolate dehydrogenase/cyclohydrolase family. As to quaternary structure, homodimer.

It carries out the reaction (6R)-5,10-methylene-5,6,7,8-tetrahydrofolate + NADP(+) = (6R)-5,10-methenyltetrahydrofolate + NADPH. It catalyses the reaction (6R)-5,10-methenyltetrahydrofolate + H2O = (6R)-10-formyltetrahydrofolate + H(+). It participates in one-carbon metabolism; tetrahydrofolate interconversion. Catalyzes the oxidation of 5,10-methylenetetrahydrofolate to 5,10-methenyltetrahydrofolate and then the hydrolysis of 5,10-methenyltetrahydrofolate to 10-formyltetrahydrofolate. This is Bifunctional protein FolD from Synechococcus sp. (strain JA-3-3Ab) (Cyanobacteria bacterium Yellowstone A-Prime).